The following is a 380-amino-acid chain: Anhydro-N-acetylmuramic acid kinase (380 aa).

Residue 9-16 (GTSADGVD) coordinates ATP.

The protein belongs to the anhydro-N-acetylmuramic acid kinase family.

The enzyme catalyses 1,6-anhydro-N-acetyl-beta-muramate + ATP + H2O = N-acetyl-D-muramate 6-phosphate + ADP + H(+). Its pathway is amino-sugar metabolism; 1,6-anhydro-N-acetylmuramate degradation. It participates in cell wall biogenesis; peptidoglycan recycling. Catalyzes the specific phosphorylation of 1,6-anhydro-N-acetylmuramic acid (anhMurNAc) with the simultaneous cleavage of the 1,6-anhydro ring, generating MurNAc-6-P. Is required for the utilization of anhMurNAc either imported from the medium or derived from its own cell wall murein, and thus plays a role in cell wall recycling. This chain is Anhydro-N-acetylmuramic acid kinase, found in Synechococcus sp. (strain CC9902).